The following is a 326-amino-acid chain: Olfactory receptor 11H2 (326 aa).

The Extracellular segment spans residues methionine 1–serine 44. N-linked (GlcNAc...) asparagine glycans are attached at residues asparagine 13 and asparagine 18. Residues leucine 45–tryptophan 65 traverse the membrane as a helical segment. At cysteine 66–threonine 72 the chain is on the cytoplasmic side. A helical transmembrane segment spans residues proline 73–valine 93. The Extracellular portion of the chain corresponds to proline 94–cysteine 112. Asparagine 106 carries an N-linked (GlcNAc...) asparagine glycan. Cysteine 112 and cysteine 194 form a disulfide bridge. A helical membrane pass occupies residues phenylalanine 113–methionine 133. Residues alanine 134–lysine 158 lie on the Cytoplasmic side of the membrane. Residues leucine 159 to serine 179 form a helical membrane-spanning segment. Over glutamine 180–threonine 216 the chain is Extracellular. A helical membrane pass occupies residues leucine 217–leucine 237. The Cytoplasmic portion of the chain corresponds to lysine 238–histidine 259. A helical transmembrane segment spans residues leucine 260–glycine 280. Over histidine 281–lysine 287 the chain is Extracellular. The chain crosses the membrane as a helical span at residues isoleucine 288 to glutamine 308. At asparagine 309–isoleucine 326 the chain is on the cytoplasmic side.

This sequence belongs to the G-protein coupled receptor 1 family.

Its subcellular location is the cell membrane. Functionally, odorant receptor. This Homo sapiens (Human) protein is Olfactory receptor 11H2 (OR11H2).